We begin with the raw amino-acid sequence, 311 residues long: tRNA dimethylallyltransferase (311 aa).

Residue glycine 11–serine 18 participates in ATP binding. Threonine 13–serine 18 contacts substrate. Interaction with substrate tRNA stretches follow at residues aspartate 36 to glutamine 39 and glutamine 160 to arginine 164.

The protein belongs to the IPP transferase family. In terms of assembly, monomer. Requires Mg(2+) as cofactor.

It carries out the reaction adenosine(37) in tRNA + dimethylallyl diphosphate = N(6)-dimethylallyladenosine(37) in tRNA + diphosphate. In terms of biological role, catalyzes the transfer of a dimethylallyl group onto the adenine at position 37 in tRNAs that read codons beginning with uridine, leading to the formation of N6-(dimethylallyl)adenosine (i(6)A). The protein is tRNA dimethylallyltransferase of Rickettsia prowazekii (strain Madrid E).